The following is a 208-amino-acid chain: Platelet-activating factor receptor (208 aa).

At 1–16 (MEPHDSSHVDSEFRYT) the chain is on the extracellular side. Residues 17-38 (LFPIVYSIIFVLGVIANGYVLW) traverse the membrane as a helical segment. Residues 39–54 (VFARLYPSKKFNEIKI) lie on the Cytoplasmic side of the membrane. A helical membrane pass occupies residues 55 to 74 (FMVNLTMADMLFLITLPLWI). The Extracellular segment spans residues 75 to 91 (VYYQNGGNWIFPKFLCN). An intrachain disulfide couples Cys90 to Cys173. A helical transmembrane segment spans residues 92–113 (LAGCLFFINTYCSVAFLGVITY). Residues 114 to 133 (NRFQAVTRPIKTAQANTRKR) are Cytoplasmic-facing. The helical transmembrane segment at 134 to 155 (GISLSLVIWVAIVGAASYFFIL) threads the bilayer. Residues 156-184 (DSTNTVPNSAGSGNITRCFEHYEKGSVPV) lie on the Extracellular side of the membrane. Asn169 is a glycosylation site (N-linked (GlcNAc...) asparagine). The helical transmembrane segment at 185–205 (LIIHIFIVFSFFLVFLIILFC) threads the bilayer. Topologically, residues 206–208 (NLV) are cytoplasmic.

The protein belongs to the G-protein coupled receptor 1 family. In terms of assembly, interacts with ARRB1.

The protein resides in the cell membrane. In terms of biological role, receptor for platelet activating factor, a chemotactic phospholipid mediator that possesses potent inflammatory, smooth-muscle contractile and hypotensive activity. Seems to mediate its action via a G protein that activates a phosphatidylinositol-calcium second messenger system. This is Platelet-activating factor receptor (PTAFR) from Macaca mulatta (Rhesus macaque).